The sequence spans 297 residues: Polyhedral envelope protein (297 aa).

Belongs to the baculoviridae PE family.

The protein resides in the virion membrane. In terms of biological role, major component of the polyhedra envelope. The polypeptide is Polyhedral envelope protein (Orgyia pseudotsugata (Douglas-fir tussock moth)).